We begin with the raw amino-acid sequence, 131 residues long: Small ribosomal subunit protein uS8 (131 aa).

The protein belongs to the universal ribosomal protein uS8 family. As to quaternary structure, part of the 30S ribosomal subunit. Contacts proteins S5 and S12.

In terms of biological role, one of the primary rRNA binding proteins, it binds directly to 16S rRNA central domain where it helps coordinate assembly of the platform of the 30S subunit. The protein is Small ribosomal subunit protein uS8 of Legionella pneumophila (strain Paris).